The sequence spans 578 residues: Proline--tRNA ligase (578 aa).

This sequence belongs to the class-II aminoacyl-tRNA synthetase family. ProS type 1 subfamily. In terms of assembly, homodimer.

Its subcellular location is the cytoplasm. It catalyses the reaction tRNA(Pro) + L-proline + ATP = L-prolyl-tRNA(Pro) + AMP + diphosphate. Functionally, catalyzes the attachment of proline to tRNA(Pro) in a two-step reaction: proline is first activated by ATP to form Pro-AMP and then transferred to the acceptor end of tRNA(Pro). As ProRS can inadvertently accommodate and process non-cognate amino acids such as alanine and cysteine, to avoid such errors it has two additional distinct editing activities against alanine. One activity is designated as 'pretransfer' editing and involves the tRNA(Pro)-independent hydrolysis of activated Ala-AMP. The other activity is designated 'posttransfer' editing and involves deacylation of mischarged Ala-tRNA(Pro). The misacylated Cys-tRNA(Pro) is not edited by ProRS. The protein is Proline--tRNA ligase of Brachyspira hyodysenteriae (strain ATCC 49526 / WA1).